The sequence spans 120 residues: Small ribosomal subunit protein uS13 (120 aa).

Residues 93–120 are disordered; that stretch reads GLPVRGQNTKNNARTRKGPRRTVANKKK. The span at 105-120 shows a compositional bias: basic residues; it reads ARTRKGPRRTVANKKK.

Belongs to the universal ribosomal protein uS13 family. As to quaternary structure, part of the 30S ribosomal subunit. Has been shown to cross-link to S19 forming a loose heterodimer. Forms two bridges to the 50S subunit in the 70S ribosome.

Its function is as follows. Located at the top of the head of the 30S subunit, it contacts several helices of the 16S rRNA. In the 70S ribosome it contacts the 23S rRNA (bridge B1a) and protein L5 of the 50S subunit (bridge B1b), connecting the 2 subunits; these bridges are implicated in subunit movement. Contacts the tRNA in the A and P-sites. The polypeptide is Small ribosomal subunit protein uS13 (rpsM) (Geobacillus stearothermophilus (Bacillus stearothermophilus)).